A 257-amino-acid chain; its full sequence is Putative cysteine-rich repeat secretory protein 28 (257 aa).

The N-terminal stretch at 1–26 is a signal peptide; the sequence is MFSTFGSVPILTVVAIQLFLIRNVLS. Gnk2-homologous domains follow at residues 32-136 and 142-254; these read AYLH…TVDS and YEND…LYPF.

It belongs to the cysteine-rich repeat secretory protein family.

The protein localises to the secreted. The protein is Putative cysteine-rich repeat secretory protein 28 (CRRSP28) of Arabidopsis thaliana (Mouse-ear cress).